We begin with the raw amino-acid sequence, 523 residues long: 2-isopropylmalate synthase (523 aa).

One can recognise a Pyruvate carboxyltransferase domain in the interval 5–267 (VIIFDTTLRD…HTAINHQEIW (263 aa)). Mn(2+) is bound by residues Asp-14, His-202, His-204, and Asn-238. The regulatory domain stretch occupies residues 392-523 (RLDYFSVQSG…QHNENNKETV (132 aa)).

The protein belongs to the alpha-IPM synthase/homocitrate synthase family. LeuA type 1 subfamily. Homodimer. Mn(2+) is required as a cofactor.

It localises to the cytoplasm. It catalyses the reaction 3-methyl-2-oxobutanoate + acetyl-CoA + H2O = (2S)-2-isopropylmalate + CoA + H(+). It functions in the pathway amino-acid biosynthesis; L-leucine biosynthesis; L-leucine from 3-methyl-2-oxobutanoate: step 1/4. Its function is as follows. Catalyzes the condensation of the acetyl group of acetyl-CoA with 3-methyl-2-oxobutanoate (2-ketoisovalerate) to form 3-carboxy-3-hydroxy-4-methylpentanoate (2-isopropylmalate). The polypeptide is 2-isopropylmalate synthase (Escherichia coli O127:H6 (strain E2348/69 / EPEC)).